The chain runs to 272 residues: 2-dehydro-3-deoxyphosphooctonate aldolase (272 aa).

This sequence belongs to the KdsA family.

It localises to the cytoplasm. The catalysed reaction is D-arabinose 5-phosphate + phosphoenolpyruvate + H2O = 3-deoxy-alpha-D-manno-2-octulosonate-8-phosphate + phosphate. Its pathway is carbohydrate biosynthesis; 3-deoxy-D-manno-octulosonate biosynthesis; 3-deoxy-D-manno-octulosonate from D-ribulose 5-phosphate: step 2/3. The protein operates within bacterial outer membrane biogenesis; lipopolysaccharide biosynthesis. The chain is 2-dehydro-3-deoxyphosphooctonate aldolase from Pelobacter propionicus (strain DSM 2379 / NBRC 103807 / OttBd1).